Consider the following 145-residue polypeptide: DnaJ homolog subfamily B member 3 (145 aa).

A J domain is found at 1-69 (MVDYYEVLDV…KKRDIYDRYG (69 aa)).

Expressed in sperm (at protein level).

In terms of biological role, may operate as a co-chaperone of the male germ cell- and haploid stage-specific Hsp70 proteins. In Homo sapiens (Human), this protein is DnaJ homolog subfamily B member 3 (DNAJB3).